A 265-amino-acid chain; its full sequence is Uroporphyrinogen-III synthase (265 aa).

The protein belongs to the uroporphyrinogen-III synthase family. Monomer.

It localises to the cytoplasm. The protein resides in the cytosol. It catalyses the reaction hydroxymethylbilane = uroporphyrinogen III + H2O. Its pathway is porphyrin-containing compound metabolism; protoporphyrin-IX biosynthesis; coproporphyrinogen-III from 5-aminolevulinate: step 3/4. Catalyzes cyclization of the linear tetrapyrrole, hydroxymethylbilane, to the macrocyclic uroporphyrinogen III, the branch point for the various sub-pathways leading to the wide diversity of porphyrins. Porphyrins act as cofactors for a multitude of enzymes that perform a variety of processes within the cell such as methionine synthesis (vitamin B12) or oxygen transport (heme). This chain is Uroporphyrinogen-III synthase (Uros), found in Mus musculus (Mouse).